Reading from the N-terminus, the 649-residue chain is UvrABC system protein C (649 aa).

The GIY-YIG domain maps to 12-91; the sequence is SSPGVYLMKS…IKQHRPKYNI (80 aa). A UVR domain is found at 201-236; sequence NEVARLYRSKMNLASEQMRYEDAARYRDLLRAIEVT. Residues 603–649 form a disordered region; the sequence is RLHGGPLPNPPPPGEGAMGDGSIPSPRNGVMDDSIPSPSGRGWPKAG.

This sequence belongs to the UvrC family. In terms of assembly, interacts with UvrB in an incision complex.

The protein resides in the cytoplasm. In terms of biological role, the UvrABC repair system catalyzes the recognition and processing of DNA lesions. UvrC both incises the 5' and 3' sides of the lesion. The N-terminal half is responsible for the 3' incision and the C-terminal half is responsible for the 5' incision. This Geobacter sp. (strain M21) protein is UvrABC system protein C.